The sequence spans 1481 residues: Cystic fibrosis transmembrane conductance regulator (1481 aa).

Topologically, residues 1–77 (MQKSPLVKAS…KLINALRRCF (77 aa)) are cytoplasmic. A helical transmembrane segment spans residues 78-98 (LWRFIFYGILLYLGEVTKAVQ). The 285-residue stretch at 81–365 (FIFYGILLYL…GAVQTWYDSL (285 aa)) folds into the ABC transmembrane type-1 1 domain. Over 99–122 (PLLLGRIIASYDPDNKEERSIAIY) the chain is Extracellular. A helical transmembrane segment spans residues 123-146 (LAIGLCLLFIVRTLLLHPAIFGLQ). The Cytoplasmic segment spans residues 147–195 (HIGMQMRIAMFSLIYKKTLKLSSRVLDKISIGQLVSLLSNNLNKFDEGL). A helical transmembrane segment spans residues 196-216 (ALAHFVWIAPLQVTLLMGLLW). Residues 217 to 222 (DLLQAS) lie on the Extracellular side of the membrane. The helical transmembrane segment at 223–243 (AFCGLAVLIVLALFQAWLGKM) threads the bilayer. Residues 244-298 (MMKYRDQRAGKINERLVITSEMIENIQSVKAYCWEEAMEKMIENLRQTELKLTRK) lie on the Cytoplasmic side of the membrane. Residues 299–319 (AAYMRYFNSAAFFFSGFFVVF) form a helical membrane-spanning segment. Residues 320 to 339 (LSVLPYAFLQGIILRKIFTT) are Extracellular-facing. The helical transmembrane segment at 340–358 (ISFCIVLRMAITRQFPGAV) threads the bilayer. The Cytoplasmic segment spans residues 359–859 (QTWYDSLGAI…YLRYITVHKS (501 aa)). ATP is bound by residues Trp-401, Ser-435, 459–466 (GSTGAGKT), and Gln-494. The region spanning 424–647 (NGDNKLFFSN…RPDFSSKLMG (224 aa)) is the ABC transporter 1 domain. Cys-525 carries the S-palmitoyl cysteine lipid modification. Ser-550 is subject to Phosphoserine. The interval 655–832 (SAERRNSILT…EEINEEDLKE (178 aa)) is disordered R region. 2 positions are modified to phosphoserine; by PKA: Ser-661 and Ser-671. A Phosphoserine; by PKC modification is found at Ser-687. Lys-689 is covalently cross-linked (Glycyl lysine isopeptide (Lys-Gly) (interchain with G-Cter in ubiquitin)). 2 positions are modified to phosphoserine; by PKA: Ser-701 and Ser-713. Thr-718 bears the Phosphothreonine mark. Ser-738, Ser-769, Ser-796, and Ser-814 each carry phosphoserine; by PKA. A helical membrane pass occupies residues 860–880 (LILVLIWCLIIFLAEVAASLV). Residues 860 to 1156 (LILVLIWCLI…AVNSSIDVDS (297 aa)) form the ABC transmembrane type-1 2 domain. Topologically, residues 881-919 (VLWLLKNNTPQQEMNSTQSGNRSYPVIITNTSFYYIFYI) are extracellular. Asn-895 and Asn-901 each carry an N-linked (GlcNAc...) asparagine glycan. A discontinuously helical transmembrane segment spans residues 920–940 (YVGVADTLLALGLFRGLPLVH). Residues 941–991 (TLITVSKILHHKMLRSVLQAPMSTLNALKAGGILNRFSKDIAILDDLLPLT) lie on the Cytoplasmic side of the membrane. A helical transmembrane segment spans residues 992–1012 (IFDFIQLLLIVIGAIAVVSVL). At 1013-1014 (QP) the chain is on the extracellular side. Residues 1015–1035 (YIFLATVPVIAAFIMLRAYFL) traverse the membrane as a helical segment. The Cytoplasmic portion of the chain corresponds to 1036–1096 (HTSQQLKQLE…TANWFLYLST (61 aa)). Residues 1097 to 1117 (LRWFQMRIEMIFVIFFIAVTF) form a helical membrane-spanning segment. Topologically, residues 1118–1131 (ISILTTGEGQGSVG) are extracellular. Residues 1132 to 1152 (IILTLAMNIMSTLQWAVNSSI) form a helical membrane-spanning segment. Topologically, residues 1153-1481 (DVDSLMRSVS…TEEEVQETRL (329 aa)) are cytoplasmic. Positions 1211 to 1444 (MIVKDLTAKY…KSLFRQAISS (234 aa)) constitute an ABC transporter 2 domain. ATP is bound by residues Tyr-1220 and 1245–1252 (GRTGSGKS). An interaction with GORASP2 region spans residues 1387–1481 (RTIKQAFADC…TEEEVQETRL (95 aa)). A lipid anchor (S-palmitoyl cysteine) is attached at Cys-1396. Phosphoserine occurs at positions 1445 and 1457. Over residues 1453 to 1462 (HRNSSKHKSR) the composition is skewed to basic residues. The segment at 1453–1481 (HRNSSKHKSRSQITALKEETEEEVQETRL) is disordered. Residues 1471 to 1481 (ETEEEVQETRL) are compositionally biased toward acidic residues. Residues 1479–1481 (TRL) carry the PDZ-binding motif.

It belongs to the ABC transporter superfamily. ABCC family. CFTR transporter (TC 3.A.1.202) subfamily. As to quaternary structure, monomer; does not require oligomerization for channel activity. May form oligomers in the membrane. Interacts with SLC26A3, SLC26A6 and NHERF1. Interacts with SHANK2. Interacts with MYO6. Interacts (via C-terminus) with GOPC (via PDZ domain); this promotes CFTR internalization and thereby decreases channel activity. Interacts with SLC4A7 through NHERF1. Found in a complex with MYO5B and RAB11A. Interacts with ANO1. Interacts with SLC26A8. Interacts with AHCYL1; the interaction increases CFTR activity. Interacts with CSE1L. The core-glycosylated form interacts with GORASP2 (via PDZ GRASP-type 1 domain) in respone to ER stress. Interacts with MARCHF2; the interaction leads to CFTR ubiqtuitination and degradation. Interacts with ADGRG2. Post-translationally, N-glycosylated. Phosphorylated; cAMP treatment promotes phosphorylation and activates the channel. Dephosphorylation decreases the ATPase activity (in vitro). Phosphorylation at PKA sites activates the channel. Phosphorylation at PKC sites enhances the response to phosphorylation by PKA. Phosphorylated by AMPK; this inhibits channel activity. In terms of processing, ubiquitinated, leading to its degradation in the lysosome. Deubiquitination by USP10 in early endosomes enhances its endocytic recycling to the cell membrane. Ubiquitinated by RNF185 during ER stress. Ubiquitinated by MARCHF2.

Its subcellular location is the apical cell membrane. The protein resides in the early endosome membrane. It is found in the cell membrane. It localises to the recycling endosome membrane. The protein localises to the endoplasmic reticulum membrane. Its subcellular location is the nucleus. The enzyme catalyses ATP + H2O + closed Cl(-) channel = ADP + phosphate + open Cl(-) channel.. The catalysed reaction is chloride(in) = chloride(out). It catalyses the reaction hydrogencarbonate(in) = hydrogencarbonate(out). It carries out the reaction ATP + H2O = ADP + phosphate + H(+). Functionally, epithelial ion channel that plays an important role in the regulation of epithelial ion and water transport and fluid homeostasis. Mediates the transport of chloride ions across the cell membrane. Possesses an intrinsic ATPase activity and utilizes ATP to gate its channel; the passive flow of anions through the channel is gated by cycles of ATP binding and hydrolysis by the ATP-binding domains. The ion channel is also permeable to HCO(3)(-); selectivity depends on the extracellular chloride concentration. Exerts its function also by modulating the activity of other ion channels and transporters. Contributes to the regulation of the pH and the ion content of the epithelial fluid layer. Modulates the activity of the epithelial sodium channel (ENaC) complex, in part by regulating the cell surface expression of the ENaC complex. May regulate bicarbonate secretion and salvage in epithelial cells by regulating the transporter SLC4A7. Can inhibit the chloride channel activity of ANO1. Plays a role in the chloride and bicarbonate homeostasis during sperm epididymal maturation and capacitation. In Cavia porcellus (Guinea pig), this protein is Cystic fibrosis transmembrane conductance regulator.